Consider the following 247-residue polypeptide: Probable dihydroorotate dehydrogenase B (NAD(+)), electron transfer subunit (247 aa).

The 87-residue stretch at 1–87 (MLRRVTLKET…RGPYGNGFKE (87 aa)) folds into the FAD-binding FR-type domain. Positions 200, 205, 208, and 216 each coordinate [2Fe-2S] cluster.

Belongs to the PyrK family. As to quaternary structure, heterotetramer of 2 PyrK and 2 PyrD type B subunits. [2Fe-2S] cluster is required as a cofactor. FAD serves as cofactor.

Its pathway is pyrimidine metabolism; UMP biosynthesis via de novo pathway; orotate from (S)-dihydroorotate (NAD(+) route): step 1/1. Responsible for channeling the electrons from the oxidation of dihydroorotate from the FMN redox center in the PyrD type B subunit to the ultimate electron acceptor NAD(+). The chain is Probable dihydroorotate dehydrogenase B (NAD(+)), electron transfer subunit from Pyrococcus horikoshii (strain ATCC 700860 / DSM 12428 / JCM 9974 / NBRC 100139 / OT-3).